Consider the following 874-residue polypeptide: Pentatricopeptide repeat-containing protein At2g17140 (874 aa).

PPR repeat units follow at residues 111–145, 146–180, 181–215, 216–250, 251–285, 290–320, 325–359, 360–394, 395–429, 430–464, 465–499, 523–557, 558–592, 593–627, 628–662, 663–693, 697–731, 732–766, and 767–797; these read SVYL…GIAP, QTYT…GCKP, NEFT…GVLP, NKVI…GLVP, DIVT…EYLG, NSIT…IREN, SLQS…GIGP, SIYS…GVCP, DAVT…NCLP, NAYT…GYGL, DTVT…GSAA, DLIT…KLQP, DSVA…GCHK, SLET…GISP, NICT…NIAP, NVFS…AVSI, KEGL…GFEL, GTFL…GYGF, and DPAA…MMEM.

The protein belongs to the PPR family. P subfamily.

The protein is Pentatricopeptide repeat-containing protein At2g17140 of Arabidopsis thaliana (Mouse-ear cress).